A 291-amino-acid polypeptide reads, in one-letter code: Pantothenate synthetase (291 aa).

30–37 (MGALHAGH) is a binding site for ATP. H37 (proton donor) is an active-site residue. Q61 lines the (R)-pantoate pocket. A beta-alanine-binding site is contributed by Q61. ATP is bound at residue 147 to 150 (GQKD). Q153 contributes to the (R)-pantoate binding site. Residues V176 and 184–187 (LSSR) each bind ATP.

This sequence belongs to the pantothenate synthetase family. Homodimer.

The protein resides in the cytoplasm. It carries out the reaction (R)-pantoate + beta-alanine + ATP = (R)-pantothenate + AMP + diphosphate + H(+). It functions in the pathway cofactor biosynthesis; (R)-pantothenate biosynthesis; (R)-pantothenate from (R)-pantoate and beta-alanine: step 1/1. Catalyzes the condensation of pantoate with beta-alanine in an ATP-dependent reaction via a pantoyl-adenylate intermediate. The polypeptide is Pantothenate synthetase (Koribacter versatilis (strain Ellin345)).